Consider the following 154-residue polypeptide: uncharacterized protein (154 aa).

Disordered stretches follow at residues 23–63 (ERVG…VVLK) and 79–154 (IKAA…DENE). The segment covering 43-56 (PDEDGDHSDKEDEQ) has biased composition (acidic residues). Ser50 is subject to Phosphoserine. Residue Lys108 is modified to N6-acetyllysine. Ser146 carries the phosphoserine modification.

This is an uncharacterized protein from Homo sapiens (Human).